Here is a 289-residue protein sequence, read N- to C-terminus: MASGKEIRSKIASVKNTQKITRAMEMVAASKMRKAQDRMRASRPYADKIRNVIRHLAQAHQEYQHPYLTSREAKKVGFIIVSSDRGLCGGLNTNLFRTLLRTMREWDEKGVPVELCIIGQKANAFFRRFGGSIAAQATHLGDSPHVEDLIGTVKVMLDNYQEGNVDRLYLAFNEFVNTMTQRPEIEQLLPIDANVGKTDEKLEHRWDYLYEPEAKEVLDQVLIRYIESLVYQGVVENIACEQAARMVAMKAASDNAGGFIDDLQLAYNKARQAAITQELSEIVGGAAAL.

It belongs to the ATPase gamma chain family. In terms of assembly, F-type ATPases have 2 components, CF(1) - the catalytic core - and CF(0) - the membrane proton channel. CF(1) has five subunits: alpha(3), beta(3), gamma(1), delta(1), epsilon(1). CF(0) has three main subunits: a, b and c.

It is found in the cell inner membrane. In terms of biological role, produces ATP from ADP in the presence of a proton gradient across the membrane. The gamma chain is believed to be important in regulating ATPase activity and the flow of protons through the CF(0) complex. This is ATP synthase gamma chain from Nitrosococcus oceani (strain ATCC 19707 / BCRC 17464 / JCM 30415 / NCIMB 11848 / C-107).